We begin with the raw amino-acid sequence, 239 residues long: Uridylate kinase (239 aa).

10–13 (KFSG) is an ATP binding site. Residues 18–23 (GENGFG) form an involved in allosteric activation by GTP region. G52 contributes to the UMP binding site. 2 residues coordinate ATP: G53 and R57. UMP is bound by residues D73 and 134–141 (TGNPYFTT). ATP-binding residues include T161, Y167, and D170.

This sequence belongs to the UMP kinase family. As to quaternary structure, homohexamer.

It localises to the cytoplasm. It catalyses the reaction UMP + ATP = UDP + ADP. The protein operates within pyrimidine metabolism; CTP biosynthesis via de novo pathway; UDP from UMP (UMPK route): step 1/1. With respect to regulation, allosterically activated by GTP. Inhibited by UTP. Its function is as follows. Catalyzes the reversible phosphorylation of UMP to UDP. The polypeptide is Uridylate kinase (Campylobacter jejuni subsp. doylei (strain ATCC BAA-1458 / RM4099 / 269.97)).